We begin with the raw amino-acid sequence, 573 residues long: 3-oxosteroid 1-dehydrogenase (573 aa).

Aspartate 7–lysine 36 provides a ligand contact to FAD.

The protein belongs to the FAD-dependent oxidoreductase 2 family. 3-oxosteroid dehydrogenase subfamily. FAD is required as a cofactor.

The protein resides in the cell inner membrane. The enzyme catalyses a 3-oxosteroid + A = a 3-oxo-Delta(1)-steroid + AH2. It functions in the pathway lipid metabolism; steroid degradation. Functionally, dehydrogenates steroids by introducing a double bond in steroid ring A. The sequence is that of 3-oxosteroid 1-dehydrogenase from Comamonas testosteroni (Pseudomonas testosteroni).